Consider the following 268-residue polypeptide: MSSSTLLHLLLLSSLLFSCLANVEDEFSYIEGNPNGPENWGNLKPEWETCGKGMEQSPIQLRDNRVIFDQTLGRLRRNYRAVDARLRNSGHDVLVEFKGNAGSLSINRVAYQLKRIHFHSPSEHEMNGERFDLEAQLVHESQDQKRAVVSILFIFGRADPFLSDLEDFIKQFSSSQKNEINAGVVDPNQLQIDDSAYYRYMGSFTAPPCTEGISWTVMRKVATVSPRQVLLLKQAVNENAINNARPLQPTNFRSVFYFEQLKSKVCAI.

In terms of domain architecture, Alpha-carbonic anhydrase spans 25–259 (DEFSYIEGNP…TNFRSVFYFE (235 aa)). The cysteines at positions 50 and 209 are disulfide-linked. His-91 serves as the catalytic Proton acceptor. Residues Asp-92, 117-119 (HFH), Gln-136, and 205-206 (TA) contribute to the L-ascorbate site.

Belongs to the alpha-class carbonic anhydrase family. As to quaternary structure, monomer. Homodimer. Post-translationally, not glycosylated. As to expression, expressed in tuber (at protein level).

It catalyses the reaction hydrogencarbonate + H(+) = CO2 + H2O. The enzyme catalyses 2 monodehydro-L-ascorbate radical + NADH + H(+) = 2 L-ascorbate + NAD(+). In terms of biological role, storage protein of tuber. Involved in protection against oxidative stress. Has carbonate dehydratase and weak trypsin inhibitor activity detected by measuring the dehydration of sodium bicarbonate and the inhibition of trypsin-catalyzed hydrolysis of N-benzoyl-L-arginine-4-nitro anilide, respectively. Contrarily, no carbonate dehydratase or trypsin inhibitor activity detected by measuring the hydrolysis of 4-nitrophenyl acetate or the inhibition of bovine trypsin-catalyzed hydrolysis of N-benzoyl-L-arginine ethyl ester, respectively. Has dehydroascorbate (DHA) reductase and monodehydroascorbate (MDA) reductase activities. Catalyzes the reactions of carbonate dehydratase and DHA reductase independently of zinc and glutathione (GSH). The coupled reaction is capable of recycling a plant antioxidant ascorbate using ubiquitous compounds H(2)O and CO(2). Exhibits antioxidant activity. Able to scavenge 1,1-diphenyl-2-picrylhydrazyl (DPPH) radical and hydroxyl radicals. Exhibits immunomodulatory activity. Activates Toll-like receptor 4 signaling pathways by up-regulating the gene expression of pro-inflammatory cytokines, such as tumor necrosis factor alpha, interleukin-1 beta and interleukin-6, and chemokines RANTES and MCP-1, in mouse RAW 264.7 macrophages. Stimulates the phagocytosis of E.coli by the LPS-treated mouse macrophages. This is Dioscorin DB3S from Dioscorea polystachya (Chinese yam).